Consider the following 1400-residue polypeptide: S phase cyclin A-associated protein in the endoplasmic reticulum (1400 aa).

Disordered regions lie at residues 36–61 (ESKDDDGKPKCQTGGKSKRTIQGTHK), 226–277 (VKAH…IRSR), 517–550 (PARPPGHGIHMHEKLSSPSRKRTIAESKKKHEEK), and 701–723 (RIEQQRQEKEKAREDAARERARD). Polar residues predominate over residues 231–243 (TGSTASSEITPAQ). The span at 539-550 (TIAESKKKHEEK) shows a compositional bias: basic and acidic residues. A C2H2-type zinc finger spans residues 792–816 (KQCSLCNVLISSEVYLFSHVKGRKH). Residue Ser-832 is modified to Phosphoserine.

As to quaternary structure, interacts with CCNA2/CDK2 complex, but not with CCNA2/CDC2, CCNB1/CDC2 or CCNE1/CDK2 complexes, at multiple phases of the cell cycle, including S and G2/M. Post-translationally, phosphorylated in vitro by the CCNA2/CDK2 complex. Widely expressed with high expression in testis. Isoform 1 is detected in various tissues, including retina, fetal and adult brain. Isoform 2 is expressed in the retina at high levels, and in the brain at very low levels.

The protein localises to the endoplasmic reticulum. The protein resides in the nucleus. CCNA2/CDK2 regulatory protein that transiently maintains CCNA2 in the cytoplasm. This chain is S phase cyclin A-associated protein in the endoplasmic reticulum, found in Homo sapiens (Human).